Reading from the N-terminus, the 182-residue chain is CDP-diacylglycerol--glycerol-3-phosphate 3-phosphatidyltransferase (182 aa).

Over Met-1–Phe-12 the chain is Cytoplasmic. Residues Arg-13–Leu-37 form a helical membrane-spanning segment. The Periplasmic segment spans residues Ile-38–Thr-60. Residues Arg-61 to Leu-81 form a helical membrane-spanning segment. At Val-82–Phe-86 the chain is on the cytoplasmic side. Residues His-87 to Ala-107 form a helical membrane-spanning segment. The Periplasmic segment spans residues Leu-108 to Pro-145. A helical transmembrane segment spans residues Asp-146–Met-168. The Cytoplasmic portion of the chain corresponds to Phe-169–Glu-181.

It belongs to the CDP-alcohol phosphatidyltransferase class-I family.

The protein resides in the cell inner membrane. The enzyme catalyses a CDP-1,2-diacyl-sn-glycerol + sn-glycerol 3-phosphate = a 1,2-diacyl-sn-glycero-3-phospho-(1'-sn-glycero-3'-phosphate) + CMP + H(+). It functions in the pathway phospholipid metabolism; phosphatidylglycerol biosynthesis; phosphatidylglycerol from CDP-diacylglycerol: step 1/2. Its function is as follows. Catalyzes the conversion of cytidine diphosphate diacylglycerol (CDP-DG) and glycerol 3-phosphate into phosphatidylglycerol. Essential for the synthesis of anionic phospholipids, thereby playing a role in balancing the ratio of zwitterionic and anionic phospholipids, which is thought to be important for normal membrane function. The polypeptide is CDP-diacylglycerol--glycerol-3-phosphate 3-phosphatidyltransferase (Sodalis glossinidius (strain morsitans)).